The sequence spans 976 residues: MALFRDIVLLGFLFCLSLVATVTSEEGATLLEIKKSFKDVNNVLYDWTTSPSSDYCVWRGVSCENVTFNVVALNLSDLNLDGEISPAIGDLKSLLSIDLRGNRLSGQIPDEIGDCSSLQNLDLSFNELSGDIPFSISKLKQLEQLILKNNQLIGPIPSTLSQIPNLKILDLAQNKLSGEIPRLIYWNEVLQYLGLRGNNLVGNISPDLCQLTGLWYFDVRNNSLTGSIPETIGNCTAFQVLDLSYNQLTGEIPFDIGFLQVATLSLQGNQLSGKIPSVIGLMQALAVLDLSGNLLSGSIPPILGNLTFTEKLYLHSNKLTGSIPPELGNMSKLHYLELNDNHLTGHIPPELGKLTDLFDLNVANNDLEGPIPDHLSSCTNLNSLNVHGNKFSGTIPRAFQKLESMTYLNLSSNNIKGPIPVELSRIGNLDTLDLSNNKINGIIPSSLGDLEHLLKMNLSRNHITGVVPGDFGNLRSIMEIDLSNNDISGPIPEELNQLQNIILLRLENNNLTGNVGSLANCLSLTVLNVSHNNLVGDIPKNNNFSRFSPDSFIGNPGLCGSWLNSPCHDSRRTVRVSISRAAILGIAIGGLVILLMVLIAACRPHNPPPFLDGSLDKPVTYSTPKLVILHMNMALHVYEDIMRMTENLSEKYIIGHGASSTVYKCVLKNCKPVAIKRLYSHNPQSMKQFETELEMLSSIKHRNLVSLQAYSLSHLGSLLFYDYLENGSLWDLLHGPTKKKTLDWDTRLKIAYGAAQGLAYLHHDCSPRIIHRDVKSSNILLDKDLEARLTDFGIAKSLCVSKSHTSTYVMGTIGYIDPEYARTSRLTEKSDVYSYGIVLLELLTRRKAVDDESNLHHLIMSKTGNNEVMEMADPDITSTCKDLGVVKKVFQLALLCTKRQPNDRPTMHQVTRVLGSFMLSEQPPAATDTSATLAGSCYVDEYANLKTPHSVNCSSMSASDAQLFLRFGQVISQNSE.

A signal peptide spans 1–24 (MALFRDIVLLGFLFCLSLVATVTS). At 25-580 (EEGATLLEIK…RRTVRVSISR (556 aa)) the chain is on the extracellular side. Residues Asn-65 and Asn-74 are each glycosylated (N-linked (GlcNAc...) asparagine). LRR repeat units lie at residues 69–92 (NVVA…GDLK), 93–115 (SLLS…IGDC), 117–140 (SLQN…SKLK), 141–163 (QLEQ…LSQI), 165–187 (NLKI…IYWN), 189–212 (VLQY…CQLT), 213–235 (GLWY…IGNC), 237–259 (AFQV…IGFL), 260–282 (QVAT…IGLM), 284–306 (ALAV…LGNL), 308–330 (FTEK…LGNM), 332–355 (KLHY…GKLT), 356–379 (DLFD…SSCT), 380–401 (NLNS…AFQK), 404–425 (SMTY…ELSR), 428–449 (NLDT…SLGD), 452–473 (HLLK…DFGN), 476–498 (SIME…LNQL), 500–522 (NIIL…ANCL), and 523–545 (SLTV…NNFS). Residues Asn-221 and Asn-234 are each glycosylated (N-linked (GlcNAc...) asparagine). N-linked (GlcNAc...) asparagine glycans are attached at residues Asn-305 and Asn-329. Residue Asn-409 is glycosylated (N-linked (GlcNAc...) asparagine). N-linked (GlcNAc...) asparagine glycosylation occurs at Asn-457. N-linked (GlcNAc...) asparagine glycosylation is found at Asn-510, Asn-528, and Asn-543. Residues 581 to 601 (AAILGIAIGGLVILLMVLIAA) form a helical membrane-spanning segment. The Cytoplasmic portion of the chain corresponds to 602–976 (CRPHNPPPFL…FGQVISQNSE (375 aa)). Phosphothreonine is present on Thr-645. Residues 648–918 (LSEKYIIGHG…QVTRVLGSFM (271 aa)) form the Protein kinase domain. Residues 654–662 (IGHGASSTV) and Lys-676 contribute to the ATP site. Phosphotyrosine is present on residues Tyr-721 and Tyr-760. The active-site Proton acceptor is Asp-773. Phosphotyrosine is present on Tyr-815. Thr-823 bears the Phosphothreonine mark.

It belongs to the protein kinase superfamily. Ser/Thr protein kinase family. As to quaternary structure, homodimer and heterodimer with ERL1 and TMM. Interacts with EPF1, EPF2, EPFL4, EPFL5 and EPFL6. Interacts with SERK1, SERK2, SERK3/BAK1 and SERK4 in a EPF2-induced manner. Interacts with EPFL9/STOMAGEN. Mostly expressed in shoot apical meristems (SAM), organ primordia, flowers, siliques and young rosette leaves, and, to a lower extent, in stems and cauline leaves. Expressed in growing inflorescence stems and pedicels. Detected in epidermis, phloem and xylem.

The protein localises to the cell membrane. It catalyses the reaction L-seryl-[protein] + ATP = O-phospho-L-seryl-[protein] + ADP + H(+). It carries out the reaction L-threonyl-[protein] + ATP = O-phospho-L-threonyl-[protein] + ADP + H(+). Receptor kinase that, together with ERL1 and ERL2, regulates aerial architecture, including inflorescence (e.g. shoot apical meristem-originating organ shape, elongation of the internode and pedicels, and adaxial-abaxial polarity), and stomatal patterning (e.g. density and clustering), probably by tuning cell division and expansion. Redundantly involved with ERL1 in procambial development regulation. Forms a functional ligand-receptor pair with EPF2 (AC Q8LC53). Modulates plant transpiration efficiency by controlling stomatal density, leaf photosynthetic capacity, epidermal cell expansion, mesophyll cell proliferation and cell-cell contact. A phloem-specific expression of ER is sufficient for proper inflorescence architecture. Probable major trait regulating canalization (maintenance of phenotype despite varying environment) in many aspect of the plant physiology (e.g. plant morphology, light-dependent leaves number, branch number, flowering time, phytate and mineral concentrations) by transducing microenvironmental variation into phenotypic differentiation (ecological amplifier). May maintain development integrity in heat stress conditions. Regulates cell wall composition and structure. Confers resistance to the pathogenic bacteria Ralstonia solanacearum and to the necrotrophic fungi Plectosphaerella cucumerina and Pythium irregulare, and required for callose deposition upon infection. Resistance to P.cucumerina seems cell wall-mediated. Forms a constitutive complex with TMM involved in the recognition of the stomatal regulatory peptides EPF1, EPF2 and EPFL9/STOMAGEN. The protein is LRR receptor-like serine/threonine-protein kinase ERECTA of Arabidopsis thaliana (Mouse-ear cress).